We begin with the raw amino-acid sequence, 99 residues long: Nucleoid-associated protein EbfC (99 aa).

Belongs to the YbaB/EbfC family. Homodimer.

The protein localises to the cytoplasm. Its subcellular location is the nucleoid. Functionally, binds to DNA and alters its conformation. May be involved in regulation of gene expression, nucleoid organization and DNA protection. The chain is Nucleoid-associated protein EbfC from Borrelia duttonii (strain Ly).